Consider the following 248-residue polypeptide: 2,3-bisphosphoglycerate-dependent phosphoglycerate mutase (248 aa).

Substrate-binding positions include 8–15 (RHGESTWN), 21–22 (TG), arginine 60, 87–90 (ERHY), lysine 98, 114–115 (RR), and 183–184 (GN). Residue histidine 9 is the Tele-phosphohistidine intermediate of the active site. Glutamate 87 functions as the Proton donor/acceptor in the catalytic mechanism.

It belongs to the phosphoglycerate mutase family. BPG-dependent PGAM subfamily. Homodimer.

It carries out the reaction (2R)-2-phosphoglycerate = (2R)-3-phosphoglycerate. Its pathway is carbohydrate degradation; glycolysis; pyruvate from D-glyceraldehyde 3-phosphate: step 3/5. Catalyzes the interconversion of 2-phosphoglycerate and 3-phosphoglycerate. This Burkholderia cenocepacia (strain ATCC BAA-245 / DSM 16553 / LMG 16656 / NCTC 13227 / J2315 / CF5610) (Burkholderia cepacia (strain J2315)) protein is 2,3-bisphosphoglycerate-dependent phosphoglycerate mutase.